Consider the following 272-residue polypeptide: Phosphatidylglycerol--prolipoprotein diacylglyceryl transferase (272 aa).

Helical transmembrane passes span Leu-17 to Ala-37, Leu-55 to Tyr-75, Val-90 to Phe-110, Phe-125 to Gly-145, Pro-174 to Phe-194, Met-202 to Phe-222, and Gly-230 to Ile-250. Arg-138 is a binding site for a 1,2-diacyl-sn-glycero-3-phospho-(1'-sn-glycerol).

This sequence belongs to the Lgt family.

It is found in the cell inner membrane. It catalyses the reaction L-cysteinyl-[prolipoprotein] + a 1,2-diacyl-sn-glycero-3-phospho-(1'-sn-glycerol) = an S-1,2-diacyl-sn-glyceryl-L-cysteinyl-[prolipoprotein] + sn-glycerol 1-phosphate + H(+). Its pathway is protein modification; lipoprotein biosynthesis (diacylglyceryl transfer). Its function is as follows. Catalyzes the transfer of the diacylglyceryl group from phosphatidylglycerol to the sulfhydryl group of the N-terminal cysteine of a prolipoprotein, the first step in the formation of mature lipoproteins. The polypeptide is Phosphatidylglycerol--prolipoprotein diacylglyceryl transferase (Acinetobacter baumannii (strain AB307-0294)).